The following is a 419-amino-acid chain: Diaminopimelate decarboxylase (419 aa).

Lysine 56 is subject to N6-(pyridoxal phosphate)lysine. Residues glycine 234 and 274-277 (EPGR) each bind pyridoxal 5'-phosphate. Residues arginine 277, arginine 312, and tyrosine 316 each contribute to the substrate site. Residue cysteine 343 is the Proton donor of the active site. 2 residues coordinate substrate: glutamate 344 and tyrosine 372. Tyrosine 372 contacts pyridoxal 5'-phosphate.

It belongs to the Orn/Lys/Arg decarboxylase class-II family. LysA subfamily. Homodimer. Requires pyridoxal 5'-phosphate as cofactor.

It catalyses the reaction meso-2,6-diaminopimelate + H(+) = L-lysine + CO2. It functions in the pathway amino-acid biosynthesis; L-lysine biosynthesis via DAP pathway; L-lysine from DL-2,6-diaminopimelate: step 1/1. In terms of biological role, specifically catalyzes the decarboxylation of meso-diaminopimelate (meso-DAP) to L-lysine. This is Diaminopimelate decarboxylase from Archaeoglobus fulgidus (strain ATCC 49558 / DSM 4304 / JCM 9628 / NBRC 100126 / VC-16).